The following is a 384-amino-acid chain: Cyanate transport protein CynX (384 aa).

12 helical membrane-spanning segments follow: residues 3–23, 34–54, 68–88, 89–109, 122–142, 153–173, 204–224, 235–255, 263–283, 287–307, 322–342, and 354–374; these read LVLV…GPLL, FSVA…LALA, VAIS…YPQS, ALLL…QAVM, PLVM…GAAI, WYQT…AWWW, YFGL…AFYI, SLLA…PAMA, LLML…WLPM, VLWA…CLLL, VAFM…FSGV, and WAFH…FAPV.

Belongs to the major facilitator superfamily. Cyanate porter (TC 2.A.1.17) family.

It localises to the cell inner membrane. Its function is as follows. This protein is part of an active transport system that transports exogenous cyanate into E.coli cells. In Escherichia coli (strain K12), this protein is Cyanate transport protein CynX (cynX).